The sequence spans 215 residues: 3-demethoxyubiquinol 3-hydroxylase (215 aa).

Fe cation contacts are provided by Glu-64, Glu-94, His-97, Glu-146, Glu-178, and His-181.

It belongs to the COQ7 family. Fe cation is required as a cofactor.

It is found in the cell membrane. It carries out the reaction a 5-methoxy-2-methyl-3-(all-trans-polyprenyl)benzene-1,4-diol + AH2 + O2 = a 3-demethylubiquinol + A + H2O. It participates in cofactor biosynthesis; ubiquinone biosynthesis. Catalyzes the hydroxylation of 2-nonaprenyl-3-methyl-6-methoxy-1,4-benzoquinol during ubiquinone biosynthesis. The protein is 3-demethoxyubiquinol 3-hydroxylase of Pseudomonas putida (strain GB-1).